We begin with the raw amino-acid sequence, 158 residues long: Transcription elongation factor GreA (158 aa).

Positions 1-26 (MNKVPLTEKGAQQLREELQELKTVVR) form a coiled coil.

This sequence belongs to the GreA/GreB family.

In terms of biological role, necessary for efficient RNA polymerase transcription elongation past template-encoded arresting sites. The arresting sites in DNA have the property of trapping a certain fraction of elongating RNA polymerases that pass through, resulting in locked ternary complexes. Cleavage of the nascent transcript by cleavage factors such as GreA or GreB allows the resumption of elongation from the new 3'terminus. GreA releases sequences of 2 to 3 nucleotides. This chain is Transcription elongation factor GreA, found in Nitrosococcus oceani (strain ATCC 19707 / BCRC 17464 / JCM 30415 / NCIMB 11848 / C-107).